The primary structure comprises 825 residues: Extracellular exo-alpha-L-arabinofuranosidase (825 aa).

Residues 1 to 29 (MSRIRWRYGTAATALLVAAGLVPTATAHA) form the signal peptide. Alpha-L-arabinofuranose is bound at residue Glu-58. The CBM-cenC domain occupies 70–215 (AELVQNRSFE…ALDMVSLFPR (146 aa)). Alpha-L-arabinofuranose-binding positions include Cys-247 and 379 to 380 (NE). Glu-380 functions as the Proton donor/acceptor in the catalytic mechanism.

It belongs to the glycosyl hydrolase 51 family.

Its subcellular location is the secreted. The catalysed reaction is Hydrolysis of terminal non-reducing alpha-L-arabinofuranoside residues in alpha-L-arabinosides.. Functionally, involved in the degradation of arabinan and is a key enzyme in the complete degradation of the plant cell wall. Catalyzes the cleavage of terminal alpha-L-arabinofuranosyl residues of arabinan present in the arabinofuranosyl polysaccharides or oligosaccharides. It cannot act on other arabinose-containing polysaccharides and arabinoxylo-oligosaccharides. It leaves most of the polymer intact, including most of the main-chain residues and the arabinose side chains. It acts preferentially on the linear alpha-(1-&gt;2)-linked arabinofuranobiosides and alpha-(1-&gt;3)-linked arabinofuranobiosides, and is much less effective on alpha-(1-&gt;5)-linked arabinofuranobiosides. It also hydrolyzes the terminal alpha-(1-&gt;3)-linked arabinofuranotriosides in preference to the alpha-(1-&gt;5)-linked arabinofuranotriosides. This Streptomyces chartreusis protein is Extracellular exo-alpha-L-arabinofuranosidase.